The primary structure comprises 598 residues: Terpenoid synthase 1 (598 aa).

Mg(2+)-binding residues include Asp362, Asp366, Asn494, and Asp502. The DDXXD motif motif lies at 362-366; it reads DDTCD.

It belongs to the terpene synthase family. Tpsa subfamily. Requires Mg(2+) as cofactor. Mn(2+) serves as cofactor. Expressed exclusively in siliques.

It localises to the cytoplasm. It participates in secondary metabolite biosynthesis; terpenoid biosynthesis. This Arabidopsis thaliana (Mouse-ear cress) protein is Terpenoid synthase 1 (TPS01).